Consider the following 370-residue polypeptide: tRNA-specific 2-thiouridylase MnmA (370 aa).

Residues 11-18 and methionine 37 contribute to the ATP site; that span reads AMSGGVDS. The tract at residues 99–101 is interaction with target base in tRNA; that stretch reads NPD. The Nucleophile role is filled by cysteine 104. The cysteines at positions 104 and 201 are disulfide-linked. Residue glycine 129 participates in ATP binding. An interaction with tRNA region spans residues 151-153; the sequence is KDQ. The Cysteine persulfide intermediate role is filled by cysteine 201. An interaction with tRNA region spans residues 313–314; the sequence is RY.

This sequence belongs to the MnmA/TRMU family. In terms of assembly, interacts with TusE.

The protein resides in the cytoplasm. The enzyme catalyses S-sulfanyl-L-cysteinyl-[protein] + uridine(34) in tRNA + AH2 + ATP = 2-thiouridine(34) in tRNA + L-cysteinyl-[protein] + A + AMP + diphosphate + H(+). Functionally, catalyzes the 2-thiolation of uridine at the wobble position (U34) of tRNA(Lys), tRNA(Glu) and tRNA(Gln), leading to the formation of s(2)U34, the first step of tRNA-mnm(5)s(2)U34 synthesis. Sulfur is provided by IscS, via a sulfur-relay system. Binds ATP and its substrate tRNAs. This chain is tRNA-specific 2-thiouridylase MnmA, found in Buchnera aphidicola subsp. Baizongia pistaciae (strain Bp).